The following is an 874-amino-acid chain: Alanine--tRNA ligase (874 aa).

The Zn(2+) site is built by H562, H566, C665, and H669.

This sequence belongs to the class-II aminoacyl-tRNA synthetase family. The cofactor is Zn(2+).

Its subcellular location is the cytoplasm. It carries out the reaction tRNA(Ala) + L-alanine + ATP = L-alanyl-tRNA(Ala) + AMP + diphosphate. In terms of biological role, catalyzes the attachment of alanine to tRNA(Ala) in a two-step reaction: alanine is first activated by ATP to form Ala-AMP and then transferred to the acceptor end of tRNA(Ala). Also edits incorrectly charged Ser-tRNA(Ala) and Gly-tRNA(Ala) via its editing domain. This is Alanine--tRNA ligase from Pseudomonas savastanoi pv. phaseolicola (strain 1448A / Race 6) (Pseudomonas syringae pv. phaseolicola (strain 1448A / Race 6)).